The following is a 101-amino-acid chain: Omega-scoloptoxin(10)-Ssd1b (101 aa).

An N-terminal signal peptide occupies residues 1–23 (MNKLTIIFFTILLLTYIIVEKEA).

Contains 3 disulfide bonds. In terms of tissue distribution, expressed by the venom gland.

The protein resides in the secreted. Voltage-gated calcium channel inhibitor. This chain is Omega-scoloptoxin(10)-Ssd1b, found in Scolopendra dehaani (Thai centipede).